The primary structure comprises 205 residues: SCO2-like protein RP587 (205 aa).

3 residues coordinate Cu cation: Cys-82, Cys-86, and His-172.

The protein belongs to the SCO1/2 family.

The sequence is that of SCO2-like protein RP587 from Rickettsia prowazekii (strain Madrid E).